The following is a 316-amino-acid chain: C1GALT1-specific chaperone 1 (316 aa).

At 1-6 (MLSESS) the chain is on the cytoplasmic side. Residues 7–26 (SFLKGVMLGSIFCALITMLG) form a helical; Signal-anchor for type II membrane protein membrane-spanning segment. The Lumenal portion of the chain corresponds to 27–316 (HIRIGNRMHH…FLPPNGSEND (290 aa)).

The protein belongs to the glycosyltransferase 31 family. Beta3-Gal-T subfamily. As to quaternary structure, associates with core 1 beta-3-galactosyltransferase (C1GALT1), probably not with the soluble active form.

It localises to the membrane. Its function is as follows. Probable chaperone required for the generation of 1 O-glycan Gal-beta1-3GalNAc-alpha1-Ser/Thr (T antigen), which is a precursor for many extended O-glycans in glycoproteins. Probably acts as a specific molecular chaperone assisting the folding/stability of core 1 beta-3-galactosyltransferase (C1GALT1). The polypeptide is C1GALT1-specific chaperone 1 (C1galt1c1) (Rattus norvegicus (Rat)).